The following is a 491-amino-acid chain: Sterol 14-alpha demethylase (491 aa).

The helical transmembrane segment at 20–40 (LWMLSTVALLSILVVSVVINV) threads the bilayer. Cysteine 430 is a binding site for heme.

The protein belongs to the cytochrome P450 family. The cofactor is heme.

The protein resides in the endoplasmic reticulum membrane. The catalysed reaction is a 14alpha-methyl steroid + 3 reduced [NADPH--hemoprotein reductase] + 3 O2 = a Delta(14) steroid + formate + 3 oxidized [NADPH--hemoprotein reductase] + 4 H2O + 4 H(+). It catalyses the reaction a 14alpha-methyl steroid + reduced [NADPH--hemoprotein reductase] + O2 = a 14alpha-hydroxymethyl steroid + oxidized [NADPH--hemoprotein reductase] + H2O + H(+). It carries out the reaction a 14alpha-hydroxymethyl steroid + reduced [NADPH--hemoprotein reductase] + O2 = a 14alpha-formyl steroid + oxidized [NADPH--hemoprotein reductase] + 2 H2O + H(+). The enzyme catalyses a 14alpha-formyl steroid + reduced [NADPH--hemoprotein reductase] + O2 = a Delta(14) steroid + formate + oxidized [NADPH--hemoprotein reductase] + H2O + 2 H(+). The catalysed reaction is lanosterol + 3 reduced [NADPH--hemoprotein reductase] + 3 O2 = 4,4-dimethyl-5alpha-cholesta-8,14,24-trien-3beta-ol + formate + 3 oxidized [NADPH--hemoprotein reductase] + 4 H2O + 4 H(+). It catalyses the reaction lanosterol + reduced [NADPH--hemoprotein reductase] + O2 = 32-hydroxylanosterol + oxidized [NADPH--hemoprotein reductase] + H2O + H(+). It carries out the reaction 32-hydroxylanosterol + reduced [NADPH--hemoprotein reductase] + O2 = 32-oxolanosterol + oxidized [NADPH--hemoprotein reductase] + 2 H2O + H(+). The enzyme catalyses 32-oxolanosterol + reduced [NADPH--hemoprotein reductase] + O2 = 4,4-dimethyl-5alpha-cholesta-8,14,24-trien-3beta-ol + formate + oxidized [NADPH--hemoprotein reductase] + H2O + 2 H(+). The catalysed reaction is eburicol + 3 reduced [NADPH--hemoprotein reductase] + 3 O2 = 14-demethyleburicol + formate + 3 oxidized [NADPH--hemoprotein reductase] + 4 H2O + 4 H(+). It catalyses the reaction eburicol + reduced [NADPH--hemoprotein reductase] + O2 = 32-hydroxyeburicol + oxidized [NADPH--hemoprotein reductase] + H2O + H(+). It carries out the reaction 32-hydroxyeburicol + reduced [NADPH--hemoprotein reductase] + O2 = 32-oxoeburicol + oxidized [NADPH--hemoprotein reductase] + 2 H2O + H(+). The enzyme catalyses 32-oxoeburicol + reduced [NADPH--hemoprotein reductase] + O2 = 14-demethyleburicol + formate + oxidized [NADPH--hemoprotein reductase] + H2O + 2 H(+). It functions in the pathway steroid biosynthesis; sterol biosynthesis. Sterol 14alpha-demethylase, encoded by cyp51A, cyp51B and cyp51C, that plays a critical role in the third module of ergosterol biosynthesis pathway, being ergosterol the major sterol component in fungal membranes that participates in a variety of functions. The third module or late pathway involves the ergosterol synthesis itself through consecutive reactions that mainly occur in the endoplasmic reticulum (ER) membrane. In filamentous fungi, during the initial step of this module, lanosterol (lanosta-8,24-dien-3beta-ol) can be metabolized to eburicol. Sterol 14alpha-demethylase catalyzes the three-step oxidative removal of the 14alpha-methyl group (C-32) of both these sterols in the form of formate, and converts eburicol and lanosterol to 14-demethyleburicol (4,4,24-trimethylergosta-8,14,24(28)-trienol) and 4,4-dimethyl-5alpha-cholesta-8,14,24-trien-3beta-ol, respectively, which are further metabolized by other enzymes in the pathway to ergosterol. Can also use substrates not intrinsic to fungi, such as 24,25-dihydrolanosterol (DHL), producing 4,4'-dimethyl-8,14-cholestadien-3-beta-ol, but at lower rates than the endogenous substrates. Its function is as follows. As a target of azole drugs, plays a crucial role in azole susceptibility. The protein is Sterol 14-alpha demethylase of Aspergillus flavus (strain ATCC 200026 / FGSC A1120 / IAM 13836 / NRRL 3357 / JCM 12722 / SRRC 167).